A 319-amino-acid polypeptide reads, in one-letter code: Acetyl-coenzyme A carboxylase carboxyl transferase subunit alpha (319 aa).

One can recognise a CoA carboxyltransferase C-terminal domain in the interval 35–296 (NIDEEVHRLR…KAQLLADLAD (262 aa)).

This sequence belongs to the AccA family. As to quaternary structure, acetyl-CoA carboxylase is a heterohexamer composed of biotin carboxyl carrier protein (AccB), biotin carboxylase (AccC) and two subunits each of ACCase subunit alpha (AccA) and ACCase subunit beta (AccD).

It localises to the cytoplasm. The catalysed reaction is N(6)-carboxybiotinyl-L-lysyl-[protein] + acetyl-CoA = N(6)-biotinyl-L-lysyl-[protein] + malonyl-CoA. The protein operates within lipid metabolism; malonyl-CoA biosynthesis; malonyl-CoA from acetyl-CoA: step 1/1. In terms of biological role, component of the acetyl coenzyme A carboxylase (ACC) complex. First, biotin carboxylase catalyzes the carboxylation of biotin on its carrier protein (BCCP) and then the CO(2) group is transferred by the carboxyltransferase to acetyl-CoA to form malonyl-CoA. The sequence is that of Acetyl-coenzyme A carboxylase carboxyl transferase subunit alpha from Shigella boydii serotype 4 (strain Sb227).